Reading from the N-terminus, the 433-residue chain is Enolase (433 aa).

Residue Q167 participates in (2R)-2-phosphoglycerate binding. Residue E209 is the Proton donor of the active site. D246, E291, and D318 together coordinate Mg(2+). (2R)-2-phosphoglycerate contacts are provided by K343, R372, S373, and K394. Residue K343 is the Proton acceptor of the active site.

The protein belongs to the enolase family. As to quaternary structure, component of the RNA degradosome, a multiprotein complex involved in RNA processing and mRNA degradation. The cofactor is Mg(2+).

The protein localises to the cytoplasm. Its subcellular location is the secreted. It is found in the cell surface. The enzyme catalyses (2R)-2-phosphoglycerate = phosphoenolpyruvate + H2O. Its pathway is carbohydrate degradation; glycolysis; pyruvate from D-glyceraldehyde 3-phosphate: step 4/5. Its function is as follows. Catalyzes the reversible conversion of 2-phosphoglycerate (2-PG) into phosphoenolpyruvate (PEP). It is essential for the degradation of carbohydrates via glycolysis. The chain is Enolase from Vibrio vulnificus (strain CMCP6).